We begin with the raw amino-acid sequence, 226 residues long: ATP synthase subunit a (226 aa).

6 helical membrane passes run 17–37 (FSYF…AMMA), 79–99 (LVAT…LPGF), 105–125 (SLNL…FEGI), 134–154 (FAHF…IEIV), 176–196 (LFLM…AYVL), and 199–219 (FMAF…LAGA).

This sequence belongs to the ATPase A chain family. As to quaternary structure, F-type ATPases have 2 components, CF(1) - the catalytic core - and CF(0) - the membrane proton channel. CF(1) has five subunits: alpha(3), beta(3), gamma(1), delta(1), epsilon(1). CF(0) has three main subunits: a(1), b(2) and c(9-12). The alpha and beta chains form an alternating ring which encloses part of the gamma chain. CF(1) is attached to CF(0) by a central stalk formed by the gamma and epsilon chains, while a peripheral stalk is formed by the delta and b chains.

The protein resides in the cell inner membrane. In terms of biological role, key component of the proton channel; it plays a direct role in the translocation of protons across the membrane. The protein is ATP synthase subunit a of Campylobacter jejuni subsp. doylei (strain ATCC BAA-1458 / RM4099 / 269.97).